We begin with the raw amino-acid sequence, 252 residues long: Urease accessory protein UreD (252 aa).

This sequence belongs to the UreD family. UreD, UreF and UreG form a complex that acts as a GTP-hydrolysis-dependent molecular chaperone, activating the urease apoprotein by helping to assemble the nickel containing metallocenter of UreC. The UreE protein probably delivers the nickel.

The protein resides in the cytoplasm. Its function is as follows. Required for maturation of urease via the functional incorporation of the urease nickel metallocenter. This chain is Urease accessory protein UreD, found in Streptomyces avermitilis (strain ATCC 31267 / DSM 46492 / JCM 5070 / NBRC 14893 / NCIMB 12804 / NRRL 8165 / MA-4680).